The sequence spans 401 residues: Steroid C26-monooxygenase (401 aa).

Heme is bound at residue cysteine 343.

Belongs to the cytochrome P450 family. Heme serves as cofactor.

The catalysed reaction is cholest-4-en-3-one + 6 reduced [2Fe-2S]-[ferredoxin] + 3 O2 + 5 H(+) = (25R)-3-oxocholest-4-en-26-oate + 6 oxidized [2Fe-2S]-[ferredoxin] + 4 H2O. It participates in steroid metabolism; cholesterol degradation. Its function is as follows. Involved in the utilization of cholesterol as the sole carbon and energy source by degrading the side chain. Primarily catalyzes the sequential oxidation of the terminal methyl of cholest-4-en-3-one into (25R)-26-hydroxycholest-4-en-3-one (alcohol), (25R)-26-oxocholest-4-en-3-one (aldehyde), to finally yield the carboxylic acid (25R)-3-oxocholest-4-en-26-oate. Also able to sequentially oxidize cholesterol itself, not only cholest-4-en-3-one. This is Steroid C26-monooxygenase from Mycolicibacterium smegmatis (strain ATCC 700084 / mc(2)155) (Mycobacterium smegmatis).